The primary structure comprises 230 residues: Cytidylate kinase (230 aa).

16 to 24 (GPASAGKST) contributes to the ATP binding site.

This sequence belongs to the cytidylate kinase family. Type 1 subfamily.

Its subcellular location is the cytoplasm. The catalysed reaction is CMP + ATP = CDP + ADP. It catalyses the reaction dCMP + ATP = dCDP + ADP. In Lactobacillus gasseri (strain ATCC 33323 / DSM 20243 / BCRC 14619 / CIP 102991 / JCM 1131 / KCTC 3163 / NCIMB 11718 / NCTC 13722 / AM63), this protein is Cytidylate kinase.